A 616-amino-acid chain; its full sequence is Glycogenin-1 (616 aa).

Leu10, Tyr16, and Arg95 together coordinate UDP. UDP-alpha-D-glucose is bound by residues Leu10, Tyr16, Arg95, Lys104, Asp120, Asp122, Asn158, Ser159, Asp185, Asp188, and Gln189. UDP contacts are provided by Asp120 and Asp122. Mn(2+) contacts are provided by Asp120 and Asp122. Residue Tyr230 is glycosylated (O-linked (Glc...) tyrosine). UDP contacts are provided by His247, Gly250, and Lys253. His247 contributes to the Mn(2+) binding site. UDP-alpha-D-glucose is bound by residues Gly250 and Lys253. The span at 283 to 302 (HQLNNEVSKPKISDSDKTET) shows a compositional bias: basic and acidic residues. 3 disordered regions span residues 283-320 (HQLNNEVSKPKISDSDKTETPETITPVDAPPSNEPTTN), 335-354 (NQNAEPVPNSDHSPAPNPVP), and 371-516 (TNQP…SVDD). The span at 377–386 (ESREYSKEND) shows a compositional bias: basic and acidic residues. The span at 400-419 (SPPNSTQEPNSSYSVVSTQA) shows a compositional bias: polar residues. Residues 450-461 (STAASSNNNVSN) show a composition bias toward low complexity. 2 stretches are compositionally biased toward polar residues: residues 462–485 (QPDNKNFSNSKENNISVEPSPSNP) and 492–503 (DNIQKPSVSTND). Tyr598 carries an O-linked (Glc...) tyrosine glycan.

The protein belongs to the glycosyltransferase 8 family. Glycogenin subfamily. Requires Mn(2+) as cofactor.

Its subcellular location is the cytoplasm. The protein localises to the vacuole. It catalyses the reaction L-tyrosyl-[glycogenin] + UDP-alpha-D-glucose = alpha-D-glucosyl-L-tyrosyl-[glycogenin] + UDP + H(+). The enzyme catalyses [1,4-alpha-D-glucosyl](n)-L-tyrosyl-[glycogenin] + UDP-alpha-D-glucose = [1,4-alpha-D-glucosyl](n+1)-L-tyrosyl-[glycogenin] + UDP + H(+). Functionally, self-glucosylating initiator of glycogen synthesis. It catalyzes the formation of a short alpha (1,4)-glucosyl chain covalently attached via a glucose 1-O-tyrosyl linkage to internal tyrosine residues and these chains act as primers for the elongation reaction catalyzed by glycogen synthase. Capable of transferring glucosyl residues to unbound acceptors such as free oligoglucans or oligoglucan derivatives. The polypeptide is Glycogenin-1 (GLG1) (Saccharomyces cerevisiae (strain YJM789) (Baker's yeast)).